Consider the following 1323-residue polypeptide: DNA-directed RNA polymerase subunit beta' (1323 aa).

Cysteine 60, cysteine 62, cysteine 75, and cysteine 78 together coordinate Zn(2+). Positions 535, 537, and 539 each coordinate Mg(2+). The Zn(2+) site is built by cysteine 894, cysteine 977, cysteine 984, and cysteine 987.

It belongs to the RNA polymerase beta' chain family. As to quaternary structure, the RNAP catalytic core consists of 2 alpha, 1 beta, 1 beta' and 1 omega subunit. When a sigma factor is associated with the core the holoenzyme is formed, which can initiate transcription. Mg(2+) is required as a cofactor. It depends on Zn(2+) as a cofactor.

It catalyses the reaction RNA(n) + a ribonucleoside 5'-triphosphate = RNA(n+1) + diphosphate. DNA-dependent RNA polymerase catalyzes the transcription of DNA into RNA using the four ribonucleoside triphosphates as substrates. The sequence is that of DNA-directed RNA polymerase subunit beta' from Corynebacterium jeikeium (strain K411).